Reading from the N-terminus, the 141-residue chain is Relaxin-3 (141 aa).

A signal peptide spans 1–24 (MAMLGLLLLASWALLGALGLQAEA). 3 disulfides stabilise this stretch: C34-C128, C46-C141, and C127-C132. Positions 54–117 (ADILAHESLG…GSPGVVRGSR (64 aa)) are cleaved as a propeptide — connecting peptide.

This sequence belongs to the insulin family. As to quaternary structure, heterodimer of a B chain and an A chain linked by two disulfide bonds. High expression in the brain localized to the pons/medulla with highest levels in pars ventromedialis of the dorsal tegmental nucleus. Significant expression is also detected in the spleen, thymus, lung, testis and ovary.

Its subcellular location is the secreted. In terms of biological role, may play a role in neuropeptide signaling processes. Ligand for LGR7, relaxin-3 receptor-1 and relaxin-3 receptor-2. The chain is Relaxin-3 (Rln3) from Mus musculus (Mouse).